The primary structure comprises 495 residues: Two-component response regulator-like APRR3 (495 aa).

One can recognise a Response regulatory domain in the interval 65–183 (KVLLVENDDS…ELKNLWQHVW (119 aa)). 2 disordered regions span residues 188 to 441 (SSSG…RWAQ) and 465 to 495 (HSRK…SEDN). The span at 206-217 (PESTQGSENDAS) shows a compositional bias: polar residues. Residues 231-248 (GLSNQDGGSDNGSGTQSS) are compositionally biased toward low complexity. Residues 256 to 265 (TKSTSPSNQF) show a composition bias toward polar residues. Over residues 284–293 (RLKEAEDQKE) the composition is skewed to basic and acidic residues. The span at 294 to 304 (QIGTGSQTGMS) shows a compositional bias: polar residues. Positions 307-319 (KKAEEPGDLEKNA) are enriched in basic and acidic residues. Polar residues predominate over residues 335–350 (NRSSGNSQVESKAPSS). The stretch at 349-372 (SSNREDLQSLEQTLKKTREDRDYK) forms a coiled coil. Residues 351–378 (NREDLQSLEQTLKKTREDRDYKVGDRSV) are compositionally biased toward basic and acidic residues. 2 stretches are compositionally biased toward polar residues: residues 380–395 (RHSN…NGAT) and 420–436 (GSSS…SSGS). Positions 442 to 484 (REAALMKFRLKRKERCFEKKVRYHSRKKLAEQRPHVKGQFIRK) constitute a CCT domain. A compositionally biased stretch (basic and acidic residues) spans 483–495 (RKRDDHKSGSEDN).

Belongs to the ARR-like family. As to quaternary structure, interacts with APRR1/TOC1 (via N-terminus). Post-translationally, phosphorylated by WNK1; during the night. Phosphorylation is required for optimal interaction with APRR1/TOC1.

It is found in the nucleus. Its function is as follows. Controls photoperiodic flowering response. Component of the circadian clock. Controls the degradation of APRR1/TOC1 by the SCF(ZTL) complex. Expression of several members of the ARR-like family is controlled by circadian rhythm. The particular coordinated sequential expression of APRR9, APRR7, APRR5, APRR3 and APPR1 result to circadian waves that may be at the basis of the endogenous circadian clock. The chain is Two-component response regulator-like APRR3 (APRR3) from Arabidopsis thaliana (Mouse-ear cress).